The sequence spans 370 residues: Cell division protein DivIB (370 aa).

The disordered stretch occupies residues 1–65 (MKKKKDEELT…SNKKGTKRIV (65 aa)). At 1–74 (MKKKKDEELT…VKEQRLSRQK (74 aa)) the chain is on the cytoplasmic side. 2 stretches are compositionally biased toward basic residues: residues 25 to 34 (SRFKRKRKAT) and 47 to 63 (RNNR…GTKR). Residues 75–95 (LGILIGSTLIVIALFFGYFYS) form a helical membrane-spanning segment. Over 96–370 (SISRVQKFSV…STVNTQQDID (275 aa)) the chain is Extracellular. One can recognise a POTRA domain in the interval 98-169 (SRVQKFSVSG…GKVKIKVKEN (72 aa)). Residues 295–370 (SGWTDEAKAA…STVNTQQDID (76 aa)) form a disordered region. Composition is skewed to low complexity over residues 304-314 (ASESSKSAESS) and 327-342 (SESA…STET). Polar residues predominate over residues 356–370 (SSNAESTVNTQQDID).

Belongs to the FtsQ/DivIB family. DivIB subfamily.

It is found in the cell membrane. Cell division protein that may be involved in stabilizing or promoting the assembly of the division complex. The protein is Cell division protein DivIB of Pediococcus pentosaceus (strain ATCC 25745 / CCUG 21536 / LMG 10740 / 183-1w).